Here is a 378-residue protein sequence, read N- to C-terminus: Erythronate-4-phosphate dehydrogenase (378 aa).

Substrate contacts are provided by serine 45 and threonine 66. 2 residues coordinate NAD(+): aspartate 142 and threonine 169. Arginine 202 is a catalytic residue. An NAD(+)-binding site is contributed by aspartate 226. The active site involves glutamate 231. The active-site Proton donor is the histidine 248. Glycine 251 contacts NAD(+). Tyrosine 252 provides a ligand contact to substrate.

This sequence belongs to the D-isomer specific 2-hydroxyacid dehydrogenase family. PdxB subfamily. As to quaternary structure, homodimer.

It is found in the cytoplasm. It carries out the reaction 4-phospho-D-erythronate + NAD(+) = (R)-3-hydroxy-2-oxo-4-phosphooxybutanoate + NADH + H(+). The protein operates within cofactor biosynthesis; pyridoxine 5'-phosphate biosynthesis; pyridoxine 5'-phosphate from D-erythrose 4-phosphate: step 2/5. Catalyzes the oxidation of erythronate-4-phosphate to 3-hydroxy-2-oxo-4-phosphonooxybutanoate. This chain is Erythronate-4-phosphate dehydrogenase, found in Cellvibrio japonicus (strain Ueda107) (Pseudomonas fluorescens subsp. cellulosa).